The primary structure comprises 353 residues: Putative transcription factor MTF1 (353 aa).

2 stretches are compositionally biased toward polar residues: residues 11–26 and 36–58; these read VTRSNQQTAANTTSPA and EPSNVSDLTSEPVESTQIKQQGN. Disordered regions lie at residues 11–96 and 129–174; these read VTRS…ALPC and FTTT…TTNP. Composition is skewed to low complexity over residues 59-95 and 133-145; these read TEASQDIQQEQQQQQTHIHPQQPALSAQQTQQQPALP and NSSPNPSSPSPSS. Positions 148-164 are enriched in basic residues; it reads SHTRKNSKYTVRHHRTR. Over residues 165–174 the composition is skewed to polar residues; sequence QSSFNGTTNP.

Its subcellular location is the nucleus. Its function is as follows. May be involved in transcriptional activation. The chain is Putative transcription factor MTF1 (MTF1) from Mucor circinelloides f. lusitanicus (Mucor racemosus var. lusitanicus).